A 481-amino-acid polypeptide reads, in one-letter code: Acetyltransferase peniE (481 aa).

Active-site proton acceptor residues include H164 and D411.

This sequence belongs to the plant acyltransferase family. In terms of assembly, monomer.

Its function is as follows. Acetyltransferase; part of the gene cluster that mediates the biosynthesis of penifulvin A, a potent insecticidal sesquiterpene that features a [5.5.5.6]dioxafenestrane ring. The first step of the pathway is performed by the sesquiterpene cyclase peniA that generates the angular triquinane scaffold silphinene via cyclization of the linear farnesyl pyrophosphate (FPP). The cytochrome P450 monooxygenase peniB and the flavin-dependent monooxygenase peniC then catalyze a series of oxidation reactions to transform silphinene into penifulvin A. The dioxygenases peniD and peniF, as well as the acetyltransferase peniE, do not seem to be involved in the biosynthesis of penifulvin A. This chain is Acetyltransferase peniE, found in Penicillium patulum (Penicillium griseofulvum).